Here is a 154-residue protein sequence, read N- to C-terminus: Myoglobin (154 aa).

Positions 2–148 (GLSDGEWQLV…FRNDMAAKYK (147 aa)) constitute a Globin domain. A Phosphoserine modification is found at Ser4. His65 serves as a coordination point for nitrite. His65 lines the O2 pocket. A Phosphothreonine modification is found at Thr68. His94 contacts heme b.

The protein belongs to the globin family. Monomeric.

Its subcellular location is the cytoplasm. It is found in the sarcoplasm. It carries out the reaction Fe(III)-heme b-[protein] + nitric oxide + H2O = Fe(II)-heme b-[protein] + nitrite + 2 H(+). The catalysed reaction is H2O2 + AH2 = A + 2 H2O. In terms of biological role, monomeric heme protein which primary function is to store oxygen and facilitate its diffusion within muscle tissues. Reversibly binds oxygen through a pentacoordinated heme iron and enables its timely and efficient release as needed during periods of heightened demand. Depending on the oxidative conditions of tissues and cells, and in addition to its ability to bind oxygen, it also has a nitrite reductase activity whereby it regulates the production of bioactive nitric oxide. Under stress conditions, like hypoxia and anoxia, it also protects cells against reactive oxygen species thanks to its pseudoperoxidase activity. The polypeptide is Myoglobin (MB) (Saimiri sciureus (Common squirrel monkey)).